The chain runs to 667 residues: Probable oxidoreductase YyaE (667 aa).

The region spanning 2 to 59 (SKVHQSACPLNCWDSCGFLVTVDDGKVTKVDGDPNHPITEGKICGRGRMLETKTNSPD) is the 4Fe-4S Mo/W bis-MGD-type domain. Residues cysteine 9, cysteine 13, cysteine 17, and cysteine 45 each coordinate [4Fe-4S] cluster.

It belongs to the prokaryotic molybdopterin-containing oxidoreductase family. Requires Mo-bis(molybdopterin guanine dinucleotide) as cofactor.

This is Probable oxidoreductase YyaE (yyaE) from Bacillus subtilis (strain 168).